Reading from the N-terminus, the 529-residue chain is GMP synthase [glutamine-hydrolyzing] (529 aa).

The Glutamine amidotransferase type-1 domain occupies 17–206 (TILVLDFGSQ…AIDICQASNN (190 aa)). Residue Cys-93 is the Nucleophile of the active site. Active-site residues include His-180 and Glu-182. The GMPS ATP-PPase domain occupies 207 to 404 (WTMENFIDTE…MGVPHDLVWR (198 aa)). 235 to 241 (SGGVDST) contacts ATP. XMP-binding residues include Arg-308, Asp-466, Lys-521, and Glu-527.

As to quaternary structure, homodimer. The cofactor is Mg(2+).

It is found in the cytoplasm. Its subcellular location is the cytosol. It carries out the reaction XMP + L-glutamine + ATP + H2O = GMP + L-glutamate + AMP + diphosphate + 2 H(+). It functions in the pathway purine metabolism; GMP biosynthesis; GMP from XMP (L-Gln route): step 1/1. Functionally, catalyzes the conversion of xanthine monophosphate (XMP) to GMP in the presence of glutamine and ATP through an adenyl-XMP intermediate. This is GMP synthase [glutamine-hydrolyzing] (GUA1) from Debaryomyces hansenii (strain ATCC 36239 / CBS 767 / BCRC 21394 / JCM 1990 / NBRC 0083 / IGC 2968) (Yeast).